We begin with the raw amino-acid sequence, 289 residues long: Formamidopyrimidine-DNA glycosylase (289 aa).

Catalysis depends on proline 2, which acts as the Schiff-base intermediate with DNA. Glutamate 3 serves as the catalytic Proton donor. Lysine 61 (proton donor; for beta-elimination activity) is an active-site residue. DNA is bound by residues histidine 96, arginine 115, and lysine 161. The segment at 247 to 281 (SAYGQENLPCPRCGAPIKREKFMNRSSFSCPRCQP) adopts an FPG-type zinc-finger fold. The active-site Proton donor; for delta-elimination activity is arginine 271.

The protein belongs to the FPG family. In terms of assembly, monomer. The cofactor is Zn(2+).

The enzyme catalyses Hydrolysis of DNA containing ring-opened 7-methylguanine residues, releasing 2,6-diamino-4-hydroxy-5-(N-methyl)formamidopyrimidine.. It catalyses the reaction 2'-deoxyribonucleotide-(2'-deoxyribose 5'-phosphate)-2'-deoxyribonucleotide-DNA = a 3'-end 2'-deoxyribonucleotide-(2,3-dehydro-2,3-deoxyribose 5'-phosphate)-DNA + a 5'-end 5'-phospho-2'-deoxyribonucleoside-DNA + H(+). Involved in base excision repair of DNA damaged by oxidation or by mutagenic agents. Acts as a DNA glycosylase that recognizes and removes damaged bases. Has a preference for oxidized purines, such as 7,8-dihydro-8-oxoguanine (8-oxoG). Has AP (apurinic/apyrimidinic) lyase activity and introduces nicks in the DNA strand. Cleaves the DNA backbone by beta-delta elimination to generate a single-strand break at the site of the removed base with both 3'- and 5'-phosphates. The chain is Formamidopyrimidine-DNA glycosylase from Rhodococcus erythropolis (strain PR4 / NBRC 100887).